The following is a 279-amino-acid chain: Alcohol dehydrogenase-related 31 kDa protein (279 aa).

11 to 34 serves as a coordination point for NAD(+); the sequence is YVADCGGIALETSKVLMTKNIAKL. Ser139 lines the substrate pocket. The Proton acceptor role is filled by Tyr152.

Belongs to the short-chain dehydrogenases/reductases (SDR) family.

This is Alcohol dehydrogenase-related 31 kDa protein (Adhr) from Drosophila subobscura (Fruit fly).